An 810-amino-acid chain; its full sequence is Protein 4.1 (810 aa).

Positions 1–124 (MTTEKSLVAE…KEIEFGTSLD (124 aa)) are disordered. A Phosphoserine modification is found at S14. At T61 the chain carries Phosphothreonine. A compositionally biased stretch (basic and acidic residues) spans 62–76 (PTHEDLTKNKERTSE). S85, S86, S96, S105, S122, S150, S152, S153, S189, and S192 each carry phosphoserine. Over residues 102–118 (DVESAKEKCEGGQKEIE) the composition is skewed to basic and acidic residues. The tract at residues 152-203 (SSAETQPAQEEHREDPDFETKEGGGLEECSKIEVKEESPESKAERELKASQK) is disordered. The span at 160–200 (QEEHREDPDFETKEGGGLEECSKIEVKEESPESKAERELKA) shows a compositional bias: basic and acidic residues. The region spanning 211–492 (MHCKVSLLDD…EHHTFFRLTS (282 aa)) is the FERM domain. At Y223 the chain carries Phosphotyrosine. T379 carries the phosphothreonine modification. Positions 518–613 (TRQASALIDR…DQAEPEPTEV (96 aa)) are disordered. 4 positions are modified to phosphoserine: S522, S541, S543, and S555. Positions 587 to 601 (AQKETVKDEEKKEEG) are enriched in basic and acidic residues. Residues 615–659 (KDLDKSQEEIKKHHASISELKKNFMESVPEPRPSEWDKRLSTHSP) form a spectrin--actin-binding region. A phosphoserine mark is found at S620, S630, S655, and S658. The C-terminal (CTD) stretch occupies residues 660-810 (FRTLNINGQL…VHQETEISEE (151 aa)). Residues T682 and T805 each carry the phosphothreonine modification.

In terms of assembly, binds with a high affinity to glycophorin and with lower affinity to band III protein. Associates with the nuclear mitotic apparatus. Binds calmodulin, CPAP and DLG1. Also found to associate with contractile apparatus and tight junctions. Interacts with NUMA1; this interaction is negatively regulated by CDK1 during metaphase and promotes for anaphase-specific localization of NUMA1 in symmetrically dividing cells. Interacts with ATP2B1; regulates small intestinal calcium absorption through regulation of membrane expression of ATP2B1. In terms of processing, O-glycosylated; contains N-acetylglucosamine side chains in the C-terminal domain. Post-translationally, phosphorylated at multiple sites by different protein kinases and each phosphorylation event selectively modulates the protein's functions.

The protein localises to the nucleus. It localises to the cytoplasm. The protein resides in the cytoskeleton. Its subcellular location is the cell cortex. In terms of biological role, protein 4.1 is a major structural element of the erythrocyte membrane skeleton. It plays a key role in regulating membrane physical properties of mechanical stability and deformability by stabilizing spectrin-actin interaction. Recruits DLG1 to membranes. Required for dynein-dynactin complex and NUMA1 recruitment at the mitotic cell cortex during anaphase. In Canis lupus familiaris (Dog), this protein is Protein 4.1.